Reading from the N-terminus, the 239-residue chain is ATP synthase subunit a (239 aa).

6 helical membrane passes run 31–51, 91–111, 125–145, 151–171, 194–214, and 215–235; these read FLLQ…LGLG, VFPL…LGMI, AACA…FHGV, FMGP…IGHI, ILFF…LGLF, and TGFI…AGAI.

It belongs to the ATPase A chain family. In terms of assembly, F-type ATPases have 2 components, CF(1) - the catalytic core - and CF(0) - the membrane proton channel. CF(1) has five subunits: alpha(3), beta(3), gamma(1), delta(1), epsilon(1). CF(0) has three main subunits: a(1), b(2) and c(9-12). The alpha and beta chains form an alternating ring which encloses part of the gamma chain. CF(1) is attached to CF(0) by a central stalk formed by the gamma and epsilon chains, while a peripheral stalk is formed by the delta and b chains.

It is found in the cell inner membrane. In terms of biological role, key component of the proton channel; it plays a direct role in the translocation of protons across the membrane. In Syntrophobacter fumaroxidans (strain DSM 10017 / MPOB), this protein is ATP synthase subunit a.